Here is a 484-residue protein sequence, read N- to C-terminus: Chromosomal replication initiator protein DnaA (484 aa).

The segment at 1-73 (MQEGKNIWSL…EILIEKGHST (73 aa)) is domain I, interacts with DnaA modulators. The tract at residues 73-140 (TINVEFIHSQ…EEIHIKYRNP (68 aa)) is domain II. The segment at 141–357 (FLKKKYTFEN…AAVTKLKAHI (217 aa)) is domain III, AAA+ region. 4 residues coordinate ATP: Gly-185, Gly-187, Lys-188, and Thr-189. Residues 358–484 (DLEDIEIDTN…IELMNKINKN (127 aa)) form a domain IV, binds dsDNA region.

The protein belongs to the DnaA family. In terms of assembly, oligomerizes as a right-handed, spiral filament on DNA at oriC.

The protein localises to the cytoplasm. In terms of biological role, plays an essential role in the initiation and regulation of chromosomal replication. ATP-DnaA binds to the origin of replication (oriC) to initiate formation of the DNA replication initiation complex once per cell cycle. Binds the DnaA box (a 9 base pair repeat at the origin) and separates the double-stranded (ds)DNA. Forms a right-handed helical filament on oriC DNA; dsDNA binds to the exterior of the filament while single-stranded (ss)DNA is stabiized in the filament's interior. The ATP-DnaA-oriC complex binds and stabilizes one strand of the AT-rich DNA unwinding element (DUE), permitting loading of DNA polymerase. After initiation quickly degrades to an ADP-DnaA complex that is not apt for DNA replication. Binds acidic phospholipids. This is Chromosomal replication initiator protein DnaA from Borrelia recurrentis (strain A1).